The sequence spans 341 residues: Holliday junction branch migration complex subunit RuvB (341 aa).

Positions 1–182 (MTDADPTLRP…FGIPTRLLFY (182 aa)) are large ATPase domain (RuvB-L). ATP-binding positions include Leu-21, Arg-22, Gly-63, Lys-66, Thr-67, Thr-68, 129 to 131 (EDF), Arg-172, Tyr-182, and Arg-219. Thr-67 is a binding site for Mg(2+). The tract at residues 183-253 (TVDELFEIVS…LADHALTRLG (71 aa)) is small ATPAse domain (RuvB-S). A head domain (RuvB-H) region spans residues 256–341 (QLGLDGADRR…RPPGQSDLFG (86 aa)). Residues Arg-292, Arg-311, and Arg-316 each coordinate DNA.

Belongs to the RuvB family. In terms of assembly, homohexamer. Forms an RuvA(8)-RuvB(12)-Holliday junction (HJ) complex. HJ DNA is sandwiched between 2 RuvA tetramers; dsDNA enters through RuvA and exits via RuvB. An RuvB hexamer assembles on each DNA strand where it exits the tetramer. Each RuvB hexamer is contacted by two RuvA subunits (via domain III) on 2 adjacent RuvB subunits; this complex drives branch migration. In the full resolvosome a probable DNA-RuvA(4)-RuvB(12)-RuvC(2) complex forms which resolves the HJ.

It localises to the cytoplasm. It carries out the reaction ATP + H2O = ADP + phosphate + H(+). Functionally, the RuvA-RuvB-RuvC complex processes Holliday junction (HJ) DNA during genetic recombination and DNA repair, while the RuvA-RuvB complex plays an important role in the rescue of blocked DNA replication forks via replication fork reversal (RFR). RuvA specifically binds to HJ cruciform DNA, conferring on it an open structure. The RuvB hexamer acts as an ATP-dependent pump, pulling dsDNA into and through the RuvAB complex. RuvB forms 2 homohexamers on either side of HJ DNA bound by 1 or 2 RuvA tetramers; 4 subunits per hexamer contact DNA at a time. Coordinated motions by a converter formed by DNA-disengaged RuvB subunits stimulates ATP hydrolysis and nucleotide exchange. Immobilization of the converter enables RuvB to convert the ATP-contained energy into a lever motion, pulling 2 nucleotides of DNA out of the RuvA tetramer per ATP hydrolyzed, thus driving DNA branch migration. The RuvB motors rotate together with the DNA substrate, which together with the progressing nucleotide cycle form the mechanistic basis for DNA recombination by continuous HJ branch migration. Branch migration allows RuvC to scan DNA until it finds its consensus sequence, where it cleaves and resolves cruciform DNA. This chain is Holliday junction branch migration complex subunit RuvB, found in Ruegeria pomeroyi (strain ATCC 700808 / DSM 15171 / DSS-3) (Silicibacter pomeroyi).